Here is a 509-residue protein sequence, read N- to C-terminus: Putative 6-phosphofructo-2-kinase/fructose-2,6-bisphosphatase YLR345W (509 aa).

The residue at position 6 (S6) is a Phosphoserine. The interval 6–291 (SDDEELLNGL…FFLMNLRQKK (286 aa)) is 6-phosphofructo-2-kinase. 90–98 (GLPATSKTL) is a binding site for ATP. The Proton donor/acceptor role is filled by D173. ATP is bound at residue 212–217 (NIALAL). R237 lines the beta-D-fructose 6-phosphate pocket. The fructose-2,6-bisphosphatase stretch occupies residues 292–466 (GCVYFARCGT…IAHESTLRVL (175 aa)). Residue R298 coordinates beta-D-fructose 2,6-bisphosphate. 415 to 418 (YKES) contributes to the ATP binding site. The beta-D-fructose 2,6-bisphosphate site is built by Y433 and R464. 460–464 (ESTLR) is an ATP binding site.

The protein in the C-terminal section; belongs to the phosphoglycerate mutase family. As to quaternary structure, homodimer.

It localises to the cytoplasm. It carries out the reaction beta-D-fructose 2,6-bisphosphate + H2O = beta-D-fructose 6-phosphate + phosphate. The catalysed reaction is beta-D-fructose 6-phosphate + ATP = beta-D-fructose 2,6-bisphosphate + ADP + H(+). Synthesis and degradation of fructose 2,6-bisphosphate. The protein is Putative 6-phosphofructo-2-kinase/fructose-2,6-bisphosphatase YLR345W of Saccharomyces cerevisiae (strain ATCC 204508 / S288c) (Baker's yeast).